Here is a 171-residue protein sequence, read N- to C-terminus: ATP synthase subunit b (171 aa).

Residues 24 to 44 (INLVIVIGVLYWFLKGFLGGI) form a helical membrane-spanning segment.

It belongs to the ATPase B chain family. As to quaternary structure, F-type ATPases have 2 components, F(1) - the catalytic core - and F(0) - the membrane proton channel. F(1) has five subunits: alpha(3), beta(3), gamma(1), delta(1), epsilon(1). F(0) has four main subunits: a(1), b(1), b'(1) and c(10-14). The alpha and beta chains form an alternating ring which encloses part of the gamma chain. F(1) is attached to F(0) by a central stalk formed by the gamma and epsilon chains, while a peripheral stalk is formed by the delta, b and b' chains.

It localises to the cellular thylakoid membrane. F(1)F(0) ATP synthase produces ATP from ADP in the presence of a proton or sodium gradient. F-type ATPases consist of two structural domains, F(1) containing the extramembraneous catalytic core and F(0) containing the membrane proton channel, linked together by a central stalk and a peripheral stalk. During catalysis, ATP synthesis in the catalytic domain of F(1) is coupled via a rotary mechanism of the central stalk subunits to proton translocation. In terms of biological role, component of the F(0) channel, it forms part of the peripheral stalk, linking F(1) to F(0). The polypeptide is ATP synthase subunit b (Synechococcus sp. (strain WH7803)).